The following is a 1184-amino-acid chain: DNA-directed RNA polymerase subunit beta' (1184 aa).

4 residues coordinate Zn(2+): cysteine 60, cysteine 62, cysteine 75, and cysteine 78. Mg(2+) is bound by residues aspartate 449, aspartate 451, and aspartate 453. Zn(2+) is bound by residues cysteine 794, cysteine 867, cysteine 874, and cysteine 877.

This sequence belongs to the RNA polymerase beta' chain family. As to quaternary structure, the RNAP catalytic core consists of 2 alpha, 1 beta, 1 beta' and 1 omega subunit. When a sigma factor is associated with the core the holoenzyme is formed, which can initiate transcription. Mg(2+) is required as a cofactor. Requires Zn(2+) as cofactor.

It catalyses the reaction RNA(n) + a ribonucleoside 5'-triphosphate = RNA(n+1) + diphosphate. Functionally, DNA-dependent RNA polymerase catalyzes the transcription of DNA into RNA using the four ribonucleoside triphosphates as substrates. The protein is DNA-directed RNA polymerase subunit beta' of Thermoanaerobacter sp. (strain X514).